Here is a 173-residue protein sequence, read N- to C-terminus: Protein-export protein SecB 1 (173 aa).

The protein belongs to the SecB family. Homotetramer, a dimer of dimers. One homotetramer interacts with 1 SecA dimer.

It is found in the cytoplasm. Functionally, one of the proteins required for the normal export of preproteins out of the cell cytoplasm. It is a molecular chaperone that binds to a subset of precursor proteins, maintaining them in a translocation-competent state. It also specifically binds to its receptor SecA. The sequence is that of Protein-export protein SecB 1 from Gluconobacter oxydans (strain 621H) (Gluconobacter suboxydans).